The primary structure comprises 164 residues: Ubiquitin-fold modifier-conjugating enzyme 1 (164 aa).

Catalysis depends on Cys116, which acts as the Glycyl thioester intermediate.

This sequence belongs to the ubiquitin-conjugating enzyme family. UFC1 subfamily.

Its function is as follows. E2-like enzyme which forms an intermediate with UFM1 via a thioester linkage. This is Ubiquitin-fold modifier-conjugating enzyme 1 from Drosophila willistoni (Fruit fly).